A 913-amino-acid polypeptide reads, in one-letter code: Calcium-activated chloride channel regulator 1 (913 aa).

A signal peptide spans 1–21; it reads MGSFKSSVFILVLHLLEGALS. The metalloprotease domain stretch occupies residues 46–199; that stretch reads DETLIQQIKD…DIAGKNVVNH (154 aa). Residue H156 coordinates Zn(2+). E157 is a catalytic residue. Residues H160 and N167 each contribute to the Zn(2+) site. In terms of domain architecture, VWFA spans 306 to 475; that stretch reads IVCLVLDKSG…NGLIDAFGAL (170 aa). N-linked (GlcNAc...) asparagine glycans are attached at residues N503, N514, N770, N804, N810, N836, and N885.

The protein belongs to the CLCR family. Post-translationally, glycosylated. The translation product is autoproteolytically cleaved by the metalloprotease domain in the endoplasmic reticulum into a N-terminal and a C-terminal products that remain physically associated with each other. The cleavage is necessary for calcium-activated chloride channel (CaCC) activation activity. As to expression, expressed in mucin-producing cells in the respiratory and intestinal tracts, cutaneous sweat glands, and renal mucous glands (at protein level). Strong overexpression in the airways of horses with recurrent airway obstruction (at protein level).

The protein resides in the secreted. It is found in the extracellular space. Functionally, may be involved in mediating calcium-activated chloride conductance. May play critical roles in goblet cell metaplasia, mucus hypersecretion, cystic fibrosis and AHR. May be involved in the regulation of mucus production and/or secretion by goblet cells. Involved in the regulation of tissue inflammation in the innate immune response. May play a role as a tumor suppressor. Induces MUC5AC. The chain is Calcium-activated chloride channel regulator 1 (CLCA1) from Equus caballus (Horse).